Consider the following 482-residue polypeptide: Rhamnulokinase (482 aa).

Position 13–17 (13–17) interacts with ATP; the sequence is ASSGR. Substrate-binding positions include Gly83 and 232–234; that span reads HDT. Asp233 functions as the Proton acceptor in the catalytic mechanism. Thr255 is a binding site for ATP. Asn292 serves as a coordination point for substrate. Asn300 lines the ATP pocket. A disulfide bond links Cys349 and Cys366. Gly398 contributes to the ATP binding site. Cys409 and Cys413 are oxidised to a cystine.

Belongs to the rhamnulokinase family. The cofactor is Mg(2+).

The enzyme catalyses L-rhamnulose + ATP = L-rhamnulose 1-phosphate + ADP + H(+). It functions in the pathway carbohydrate degradation; L-rhamnose degradation; glycerone phosphate from L-rhamnose: step 2/3. Its function is as follows. Involved in the catabolism of L-rhamnose (6-deoxy-L-mannose). Catalyzes the transfer of the gamma-phosphate group from ATP to the 1-hydroxyl group of L-rhamnulose to yield L-rhamnulose 1-phosphate. This chain is Rhamnulokinase, found in Mannheimia succiniciproducens (strain KCTC 0769BP / MBEL55E).